The sequence spans 388 residues: Cell adhesion molecule 4 (388 aa).

The first 20 residues, 1–20 (MGRARRFQWPLLLLWAAAAG), serve as a signal peptide directing secretion. The 99-residue stretch at 21–119 (PGAGQEVQTE…DTHHQIATLT (99 aa)) folds into the Ig-like V-type domain. Residues 21-324 (PGAGQEVQTE…VEAQTSVPYA (304 aa)) are Extracellular-facing. Residues Asn-31 and Asn-67 are each glycosylated (N-linked (GlcNAc...) asparagine). 3 cysteine pairs are disulfide-bonded: Cys-44/Cys-104, Cys-145/Cys-199, and Cys-245/Cys-291. 2 Ig-like C2-type domains span residues 124-219 (PENP…YVLD) and 224-307 (PTAR…YVLV). Asn-286 carries N-linked (GlcNAc...) asparagine glycosylation. Residues 325 to 345 (IVGGILALLVFLIICVLVGMV) traverse the membrane as a helical segment. The Cytoplasmic segment spans residues 346-388 (WCSVRQKGSYLTHEASGLDEQGEAREAFLNGSDGHKRKEEFFI). Ser-361 carries the post-translational modification Phosphoserine.

The protein belongs to the nectin family. In terms of assembly, monomer and homodimer. In terms of processing, N-glycosylated. Expressed in brain, prostate, brain, kidney and some other organs.

It is found in the membrane. In terms of biological role, involved in the cell-cell adhesion. Has calcium- and magnesium-independent cell-cell adhesion activity. May have tumor-suppressor activity. The polypeptide is Cell adhesion molecule 4 (CADM4) (Homo sapiens (Human)).